The chain runs to 80 residues: Kunitz-type serine protease inhibitor LmKTT-1b (80 aa).

An N-terminal signal peptide occupies residues 1–21 (MKSFLLIALVLFFLFVSYASA). Residues 25 to 75 (CQLPSDVGKGKASFTRYYYNEEGGKCETFIYGGVGGNSNNFLTKEDCCREC) form the BPTI/Kunitz inhibitor domain. 3 disulfides stabilise this stretch: Cys25-Cys75, Cys50-Cys71, and Cys72-Cys80.

This sequence belongs to the venom Kunitz-type family. Scorpion delta-Ktx subfamily. Delta-Ktx 2 sub-subfamily. In terms of tissue distribution, expressed by the venom gland.

The protein resides in the secreted. In terms of biological role, serine protease inhibitor that inhibits trypsin at a molar ratio of 1:1 (Ki=160 nM). Is thermostable. The protein is Kunitz-type serine protease inhibitor LmKTT-1b of Lychas mucronatus (Chinese swimming scorpion).